The primary structure comprises 87 residues: Small ribosomal subunit protein bS20 (87 aa).

The interval 1-27 (MANIKSAKKRALQSEKRRQHNASRRSM) is disordered.

It belongs to the bacterial ribosomal protein bS20 family.

Functionally, binds directly to 16S ribosomal RNA. The sequence is that of Small ribosomal subunit protein bS20 from Aeromonas hydrophila subsp. hydrophila (strain ATCC 7966 / DSM 30187 / BCRC 13018 / CCUG 14551 / JCM 1027 / KCTC 2358 / NCIMB 9240 / NCTC 8049).